The following is a 101-amino-acid chain: Large ribosomal subunit protein bL21 (101 aa).

Belongs to the bacterial ribosomal protein bL21 family. Part of the 50S ribosomal subunit. Contacts protein L20.

In terms of biological role, this protein binds to 23S rRNA in the presence of protein L20. The protein is Large ribosomal subunit protein bL21 of Magnetococcus marinus (strain ATCC BAA-1437 / JCM 17883 / MC-1).